The chain runs to 888 residues: MLSRLFRMHGLFVASHPWEVIVGTVTLTICMMSMNMFTGNNKICGWNYECPKFEEDVLSSDIIILTITRCIAILYIYFQFQNLRQLGSKYILGIAGLFTIFSSFVFSTVVIHFLDKELTGLNEALPFFLLLIDLSRASTLAKFALSSNSQDEVRENIARGMAILGPTFTLDALVECLVIGVGTMSGVRQLEIMCCFGCMSVLANYFVFMTFFPACVSLVLELSRESREGRPIWLLSHFARVLEEEENKPNPVTQRVKMIMSLGLVLVHAHSRWIADPSPQNSTADTSKVSLGLDENVSKRIEPSVSLWQFYLSKMISMDIEQVITLSLALLLAVKYIFFEQTETESTLSLKNPITSPVVTQKKVPDDCCRREPMLVRNNQKCDSVEEETGINRERKVEVIKPLVAETDTPNRATFVVGNSSLLDTSSVLVTQEPEIELPREPRPNEECLQILGNAEKGAKFLSDAEIIQLVIAKHIPAYKLETLMETHERGVSIRRQLLSKKLSEPSSLQYLPYRDYNYSLVMGACCENVIGYMPIPVGVAGPLCLDGKEFQVPMATTEGCLVASTNRGCRAIGLGGGASSRVLADGMTRGPVVRLPRACDSAEVKAWLETSEGFAVIKEAFDSTSRFARLRKLHTSIAGRNLYIRFQSRSGDAMGMNMISKGTEKALSKLHEYFPEMQILAVSGNYCTDKKPAAINWIEGRGKSAVCEAVIPAKVVREVLKTTTEAMIEVNINKNLVGSAMAGSIGGYNAHAANIVTAIYIACGQDAAQNVGSSNCITLMEASGPTNEDLYISCTMPSIEIGTVGGGTNLLPQQACLQMLGVQGACKDNPGENARQLARIVCGTVMAGELSLMAALAAGHLVKSHMIHNRSKINLQDLQGACTKKTA.

Residues 1-9 (MLSRLFRMH) lie on the Cytoplasmic side of the membrane. A helical membrane pass occupies residues 10-39 (GLFVASHPWEVIVGTVTLTICMMSMNMFTG). At 40 to 56 (NNKICGWNYECPKFEED) the chain is on the lumenal side. Residues 57-78 (VLSSDIIILTITRCIAILYIYF) traverse the membrane as a helical segment. Positions 61–218 (DIIILTITRC…MTFFPACVSL (158 aa)) constitute an SSD domain. Residues 75-78 (YIYF) carry the INSIG-binding motif motif. Residues 79 to 89 (QFQNLRQLGSK) lie on the Cytoplasmic side of the membrane. Lys89 participates in a covalent cross-link: Glycyl lysine isopeptide (Lys-Gly) (interchain with G-Cter in ubiquitin). The chain crosses the membrane as a helical span at residues 90-114 (YILGIAGLFTIFSSFVFSTVVIHFL). The Lumenal segment spans residues 115–123 (DKELTGLNE). Residues 124–149 (ALPFFLLLIDLSRASTLAKFALSSNS) form a helical membrane-spanning segment. Residues 150–159 (QDEVRENIAR) lie on the Cytoplasmic side of the membrane. A helical transmembrane segment spans residues 160–187 (GMAILGPTFTLDALVECLVIGVGTMSGV). Over 188–191 (RQLE) the chain is Lumenal. The chain crosses the membrane as a helical span at residues 192–220 (IMCCFGCMSVLANYFVFMTFFPACVSLVL). Over 221-248 (ELSRESREGRPIWLLSHFARVLEEEENK) the chain is Cytoplasmic. Residue Lys248 forms a Glycyl lysine isopeptide (Lys-Gly) (interchain with G-Cter in ubiquitin) linkage. The helical transmembrane segment at 249 to 275 (PNPVTQRVKMIMSLGLVLVHAHSRWIA) threads the bilayer. Topologically, residues 276–314 (DPSPQNSTADTSKVSLGLDENVSKRIEPSVSLWQFYLSK) are lumenal. Asn281 and Asn296 each carry an N-linked (GlcNAc...) asparagine glycan. The chain crosses the membrane as a helical span at residues 315 to 339 (MISMDIEQVITLSLALLLAVKYIFF). The Cytoplasmic portion of the chain corresponds to 340-888 (EQTETESTLS…LQGACTKKTA (549 aa)). Residues Glu559, Lys691, and Asp767 each act as charge relay system in the active site. Residue His866 is the Proton donor of the active site. Ser872 bears the Phosphoserine; by AMPK mark.

It belongs to the HMG-CoA reductase family. Homotetramer. Homodimer. Interacts (via its SSD) with INSIG1; the interaction, accelerated by sterols, leads to the recruitment of HMGCR to AMFR/gp78 for its ubiquitination by the sterol-mediated ERAD pathway. Interacts with UBIAD1. Undergoes sterol-mediated ubiquitination and ER-associated degradation (ERAD). Accumulation of sterols in the endoplasmic reticulum (ER) membrane, triggers binding of the reductase to the ER membrane protein INSIG1 or INSIG2. The INSIG1 binding leads to the recruitment of the ubiquitin ligase, AMFR/gp78, RNF139 or RNF145, initiating ubiquitination of the reductase. The ubiquitinated reductase is then extracted from the ER membrane and delivered to cytosolic 26S proteosomes by a mechanism probably mediated by the ATPase Valosin-containing protein VCP/p97. The INSIG2-binding leads to the recruitment of the ubiquitin ligase RNF139, initiating ubiquitination of the reductase. Lys-248 is the main site of ubiquitination. Ubiquitination is enhanced by the presence of a geranylgeranylated protein. In terms of processing, N-glycosylated. Deglycosylated by NGLY1 on release from the endoplasmic reticulum (ER) in a sterol-mediated manner. Post-translationally, phosphorylated. Phosphorylation at Ser-872 reduces the catalytic activity.

It localises to the endoplasmic reticulum membrane. The protein localises to the peroxisome membrane. The enzyme catalyses (R)-mevalonate + 2 NADP(+) + CoA = (3S)-3-hydroxy-3-methylglutaryl-CoA + 2 NADPH + 2 H(+). The protein operates within metabolic intermediate biosynthesis; (R)-mevalonate biosynthesis; (R)-mevalonate from acetyl-CoA: step 3/3. With respect to regulation, regulated by a negative feedback mechanism through sterols and non-sterol metabolites derived from mevalonate. Phosphorylation at Ser-872 down-regulates the catalytic activity. Its function is as follows. Catalyzes the conversion of (3S)-hydroxy-3-methylglutaryl-CoA (HMG-CoA) to mevalonic acid, the rate-limiting step in the synthesis of cholesterol and other isoprenoids, thus plays a critical role in cellular cholesterol homeostasis. This Pongo abelii (Sumatran orangutan) protein is 3-hydroxy-3-methylglutaryl-coenzyme A reductase (HMGCR).